The chain runs to 299 residues: Single myb histone 1 (299 aa).

Residues 1-61 (MGAPKQRWTP…KWRNLSVTAG (61 aa)) form the HTH myb-type domain. A DNA-binding region (H-T-H motif) is located at residues 28–57 (WRTILRDSDFSALLRLRSNVDLKDKWRNLS). Residues 124-192 (SVARLDDLIL…KVNQKYRIAP (69 aa)) enclose the H15 domain. Residues 238–279 (EEAAAFAAKAVAEAEVAIAEAEEAARVAEAAENDAEAAKAFL) are a coiled coil.

This sequence belongs to the histone H1/H5 family. SMH subfamily. Forms a homodimer and heterodimers. In terms of tissue distribution, expressed in leaves.

The protein localises to the nucleus. The protein resides in the chromosome. It localises to the nucleolus. It is found in the telomere. Its function is as follows. Binds preferentially double-stranded telomeric repeats 5'-TTTAGGG-3', but can also bind to the single G-rich and C-rich telomeric strand. The chain is Single myb histone 1 (SMH1) from Zea mays (Maize).